The primary structure comprises 184 residues: MLRKMGEAVARVARKVNETVESGSDTLDLADCKLVSFPICIYKVLRNVSDQIHLITLANNELKSLTSKFMTTFNQLRELRLEGNYLFRLPNEVSSLQHLRAIDLSRNQFQDFPEQLTTLPALETINLEENEIVDVPVEKLAAMPALRVINLRLNPLSADVRVIAPPLIKFDMLMSPEDTRAPPP.

6 LRR repeats span residues 23 to 44 (GSDT…IYKV), 51 to 72 (QIHL…FMTT), 75 to 96 (QLRE…VSSL), 98 to 120 (HLRA…TTLP), 121 to 141 (ALET…EKLA), and 145 to 167 (ALRV…APPL). Ser175 is subject to Phosphoserine.

The polypeptide is Leucine-rich repeat-containing protein 20 (Lrrc20) (Mus musculus (Mouse)).